A 119-amino-acid polypeptide reads, in one-letter code: Beta-2-microglobulin (119 aa).

Positions 1-20 (MARFVAVALLVLLSLSGLET) are cleaved as a signal peptide. The Ig-like C1-type domain occupies 25–114 (PKIQVYSRHP…VTFSTPKTVK (90 aa)). Cysteines 45 and 100 form a disulfide.

Belongs to the beta-2-microglobulin family. As to quaternary structure, heterodimer of an alpha chain and a beta chain. Beta-2-microglobulin is the beta-chain of major histocompatibility complex class I molecules.

The protein resides in the secreted. Functionally, component of the class I major histocompatibility complex (MHC). Involved in the presentation of peptide antigens to the immune system. The sequence is that of Beta-2-microglobulin (B2M) from Callicebus personatus personatus (Masked titi).